Reading from the N-terminus, the 240-residue chain is Ribonuclease P protein component 3 (240 aa).

Belongs to the eukaryotic/archaeal RNase P protein component 3 family. Consists of a catalytic RNA component and at least 4-5 protein subunits.

The protein localises to the cytoplasm. The enzyme catalyses Endonucleolytic cleavage of RNA, removing 5'-extranucleotides from tRNA precursor.. In terms of biological role, part of ribonuclease P, a protein complex that generates mature tRNA molecules by cleaving their 5'-ends. This is Ribonuclease P protein component 3 from Halorubrum lacusprofundi (strain ATCC 49239 / DSM 5036 / JCM 8891 / ACAM 34).